Here is a 206-residue protein sequence, read N- to C-terminus: Peptidyl-tRNA hydrolase (206 aa).

A tRNA-binding site is contributed by Tyr14. The Proton acceptor role is filled by His19. 3 residues coordinate tRNA: Tyr64, Asn66, and Asn112.

Belongs to the PTH family. Monomer.

It localises to the cytoplasm. The catalysed reaction is an N-acyl-L-alpha-aminoacyl-tRNA + H2O = an N-acyl-L-amino acid + a tRNA + H(+). In terms of biological role, hydrolyzes ribosome-free peptidyl-tRNAs (with 1 or more amino acids incorporated), which drop off the ribosome during protein synthesis, or as a result of ribosome stalling. Functionally, catalyzes the release of premature peptidyl moieties from peptidyl-tRNA molecules trapped in stalled 50S ribosomal subunits, and thus maintains levels of free tRNAs and 50S ribosomes. The protein is Peptidyl-tRNA hydrolase of Rhodopseudomonas palustris (strain ATCC BAA-98 / CGA009).